The following is a 520-amino-acid chain: 2,3-bisphosphoglycerate-independent phosphoglycerate mutase (520 aa).

The Mn(2+) site is built by aspartate 13 and serine 63. Serine 63 functions as the Phosphoserine intermediate in the catalytic mechanism. Substrate is bound by residues histidine 124, 154-155, arginine 192, arginine 198, 268-271, and lysine 342; these read RD and RADR. Mn(2+) contacts are provided by aspartate 409, histidine 413, aspartate 450, histidine 451, and histidine 469.

Belongs to the BPG-independent phosphoglycerate mutase family. As to quaternary structure, monomer. The cofactor is Mn(2+).

The catalysed reaction is (2R)-2-phosphoglycerate = (2R)-3-phosphoglycerate. It functions in the pathway carbohydrate degradation; glycolysis; pyruvate from D-glyceraldehyde 3-phosphate: step 3/5. Functionally, catalyzes the interconversion of 2-phosphoglycerate and 3-phosphoglycerate. The protein is 2,3-bisphosphoglycerate-independent phosphoglycerate mutase of Colwellia psychrerythraea (strain 34H / ATCC BAA-681) (Vibrio psychroerythus).